A 109-amino-acid chain; its full sequence is Flagellar hook-basal body complex protein FliE (109 aa).

The protein belongs to the FliE family.

It localises to the bacterial flagellum basal body. The chain is Flagellar hook-basal body complex protein FliE from Pseudomonas fluorescens (strain SBW25).